Consider the following 240-residue polypeptide: Enolase-phosphatase E1 (240 aa).

Residues Asp-9 and Glu-11 each coordinate Mg(2+). Substrate is bound by residues 129–130 (SS) and Lys-168. Asp-195 is a Mg(2+) binding site.

It belongs to the HAD-like hydrolase superfamily. MasA/MtnC family. In terms of assembly, monomer. Mg(2+) is required as a cofactor.

The protein resides in the cytoplasm. Its subcellular location is the nucleus. The catalysed reaction is 5-methylsulfanyl-2,3-dioxopentyl phosphate + H2O = 1,2-dihydroxy-5-(methylsulfanyl)pent-1-en-3-one + phosphate. Its pathway is amino-acid biosynthesis; L-methionine biosynthesis via salvage pathway; L-methionine from S-methyl-5-thio-alpha-D-ribose 1-phosphate: step 3/6. It participates in amino-acid biosynthesis; L-methionine biosynthesis via salvage pathway; L-methionine from S-methyl-5-thio-alpha-D-ribose 1-phosphate: step 4/6. Bifunctional enzyme that catalyzes the enolization of 2,3-diketo-5-methylthiopentyl-1-phosphate (DK-MTP-1-P) into the intermediate 2-hydroxy-3-keto-5-methylthiopentenyl-1-phosphate (HK-MTPenyl-1-P), which is then dephosphorylated to form the acireductone 1,2-dihydroxy-3-keto-5-methylthiopentene (DHK-MTPene). This chain is Enolase-phosphatase E1, found in Candida tropicalis (strain ATCC MYA-3404 / T1) (Yeast).